Reading from the N-terminus, the 422-residue chain is UPF0761 membrane protein XAC0937 (422 aa).

The next 6 membrane-spanning stretches (helical) occupy residues 45 to 65 (VFALVPLAIVVFGVLSAFPAF), 102 to 122 (FTVAGMVALVASLLITLHSIE), 151 to 171 (GTMLAAASMAMAAYVFALPLF), 179 to 199 (LAEFAWRLAPMAVEFVCIVLI), 213 to 233 (ALPGALLAVILMEIVKWGFGF), and 247 to 267 (ALSALPILLLWIYLSWVSVLL).

Belongs to the UPF0761 family.

It localises to the cell inner membrane. The chain is UPF0761 membrane protein XAC0937 from Xanthomonas axonopodis pv. citri (strain 306).